A 390-amino-acid chain; its full sequence is Transforming growth factor beta-1 proprotein (390 aa).

The first 29 residues, 1–29, serve as a signal peptide directing secretion; that stretch reads MPPSGLRLLPLLLPLLWLLVLTPGRPAAG. Residues 30–74 form a straightjacket domain region; that stretch reads LSTCKTIDMELVKRKRIEAIRGQILSKLRLASPPSQGEVPPGPLP. The segment at 75–271 is arm domain; the sequence is EAVLALYNST…ATPLERAQHL (197 aa). 3 N-linked (GlcNAc...) asparagine glycosylation sites follow: Asn-82, Asn-136, and Asn-176. Positions 226 to 252 are bowtie tail; it reads DSRDNTLQVDINGLSSSRRGDLATIHG. Residues 244 to 246 carry the Cell attachment site motif; it reads RGD. Cystine bridges form between Cys-285/Cys-294, Cys-293/Cys-356, Cys-322/Cys-387, and Cys-326/Cys-389.

It belongs to the TGF-beta family. In terms of assembly, homodimer; disulfide-linked. Interacts with the serine proteases, HTRA1 and HTRA3: the interaction with either inhibits TGFB1-mediated signaling and the HTRA protease activity is required for this inhibition. May interact with THSD4; this interaction may lead to sequestration by FBN1 microfibril assembly and attenuation of TGFB signaling. Interacts with CD109, DPT and ASPN. Interacts with EFEMP2. Interacts with TSKU; the interaction contributes to regulation of the hair cycle. Interacts with TGFBR3. As to quaternary structure, homodimer; disulfide-linked. Interacts with transforming growth factor beta-1 (TGF-beta-1) chain; interaction is non-covalent and maintains TGF-beta-1 in a latent state; each latency-associated peptide (LAP) monomer interacts with TGF-beta-1 in the other monomer. Interacts with LTBP1; leading to regulation of TGF-beta-1 activation. Interacts with LRRC32/GARP; leading to regulation of TGF-beta-1 activation on the surface of activated regulatory T-cells (Tregs). Interacts with LRRC33/NRROS; leading to regulation of TGF-beta-1 activation in macrophages and microglia. Interacts (via cell attachment site) with integrins ITGAV and ITGB6 (ITGAV:ITGB6), leading to release of the active TGF-beta-1. Interacts with NREP; the interaction results in a decrease in TGFB1 autoinduction. Interacts with HSP90AB1; inhibits latent TGFB1 activation. Homodimer; disulfide-linked. Interacts with TGF-beta receptors (TGFBR1 and TGFBR2), leading to signal transduction. In terms of processing, transforming growth factor beta-1 proprotein: The precursor proprotein is cleaved in the Golgi apparatus by FURIN to form Transforming growth factor beta-1 (TGF-beta-1) and Latency-associated peptide (LAP) chains, which remain non-covalently linked, rendering TGF-beta-1 inactive. N-glycosylated. Deglycosylation leads to activation of Transforming growth factor beta-1 (TGF-beta-1); mechanisms triggering deglycosylation-driven activation of TGF-beta-1 are however unclear.

The protein resides in the secreted. The protein localises to the extracellular space. It is found in the extracellular matrix. Its function is as follows. Transforming growth factor beta-1 proprotein: Precursor of the Latency-associated peptide (LAP) and Transforming growth factor beta-1 (TGF-beta-1) chains, which constitute the regulatory and active subunit of TGF-beta-1, respectively. Required to maintain the Transforming growth factor beta-1 (TGF-beta-1) chain in a latent state during storage in extracellular matrix. Associates non-covalently with TGF-beta-1 and regulates its activation via interaction with 'milieu molecules', such as LTBP1, LRRC32/GARP and LRRC33/NRROS, that control activation of TGF-beta-1. Interaction with LRRC33/NRROS regulates activation of TGF-beta-1 in macrophages and microglia. Interaction with LRRC32/GARP controls activation of TGF-beta-1 on the surface of activated regulatory T-cells (Tregs). Interaction with integrins (ITGAV:ITGB6 or ITGAV:ITGB8) results in distortion of the Latency-associated peptide chain and subsequent release of the active TGF-beta-1. In terms of biological role, multifunctional protein that regulates the growth and differentiation of various cell types and is involved in various processes, such as normal development, immune function, microglia function and responses to neurodegeneration. Activation into mature form follows different steps: following cleavage of the proprotein in the Golgi apparatus, Latency-associated peptide (LAP) and Transforming growth factor beta-1 (TGF-beta-1) chains remain non-covalently linked rendering TGF-beta-1 inactive during storage in extracellular matrix. At the same time, LAP chain interacts with 'milieu molecules', such as LTBP1, LRRC32/GARP and LRRC33/NRROS that control activation of TGF-beta-1 and maintain it in a latent state during storage in extracellular milieus. TGF-beta-1 is released from LAP by integrins (ITGAV:ITGB6 or ITGAV:ITGB8): integrin-binding to LAP stabilizes an alternative conformation of the LAP bowtie tail and results in distortion of the LAP chain and subsequent release of the active TGF-beta-1. Once activated following release of LAP, TGF-beta-1 acts by binding to TGF-beta receptors (TGFBR1 and TGFBR2), which transduce signal. While expressed by many cells types, TGF-beta-1 only has a very localized range of action within cell environment thanks to fine regulation of its activation by Latency-associated peptide chain (LAP) and 'milieu molecules'. Plays an important role in bone remodeling: acts as a potent stimulator of osteoblastic bone formation, causing chemotaxis, proliferation and differentiation in committed osteoblasts. Can promote either T-helper 17 cells (Th17) or regulatory T-cells (Treg) lineage differentiation in a concentration-dependent manner. At high concentrations, leads to FOXP3-mediated suppression of RORC and down-regulation of IL-17 expression, favoring Treg cell development. At low concentrations in concert with IL-6 and IL-21, leads to expression of the IL-17 and IL-23 receptors, favoring differentiation to Th17 cells. Stimulates sustained production of collagen through the activation of CREB3L1 by regulated intramembrane proteolysis (RIP). Mediates SMAD2/3 activation by inducing its phosphorylation and subsequent translocation to the nucleus. Positively regulates odontoblastic differentiation in dental papilla cells, via promotion of IPO7-mediated translocation of phosphorylated SMAD2 to the nucleus and subsequent transcription of target genes. Can induce epithelial-to-mesenchymal transition (EMT) and cell migration in various cell types. The polypeptide is Transforming growth factor beta-1 proprotein (TGFB1) (Mustela putorius furo (European domestic ferret)).